The sequence spans 33 residues: U23-ctenitoxin-Pn1a (33 aa).

Disulfide bonds link Cys-3-Cys-16, Cys-10-Cys-21, and Cys-15-Cys-30.

As to expression, expressed by the venom gland.

It localises to the secreted. Its function is as follows. Non-toxic to mice. In Phoneutria nigriventer (Brazilian armed spider), this protein is U23-ctenitoxin-Pn1a.